The chain runs to 191 residues: Probable DNA-directed RNA polymerase subunit delta (191 aa).

Residues 14–83 form the HTH HARE-type domain; it reads LSMIEVARAI…GENKWGLRSW (70 aa). Residues 118 to 191 form a disordered region; sequence DEDAIDYRDD…EDEEDEEPVL (74 aa).

The protein belongs to the RpoE family. RNAP is composed of a core of 2 alpha, a beta and a beta' subunits. The core is associated with a delta subunit and one of several sigma factors.

Its function is as follows. Participates in both the initiation and recycling phases of transcription. In the presence of the delta subunit, RNAP displays an increased specificity of transcription, a decreased affinity for nucleic acids, and an increased efficiency of RNA synthesis because of enhanced recycling. The chain is Probable DNA-directed RNA polymerase subunit delta from Streptococcus pyogenes serotype M18 (strain MGAS8232).